Here is a 390-residue protein sequence, read N- to C-terminus: 2-deoxy-scyllo-inosose synthase (390 aa).

Residues Asp-42, 73 to 76 (EQNK), 105 to 109 (GVTGN), 129 to 130 (TT), 140 to 142 (SLK), and 151 to 152 (KN) contribute to the NAD(+) site. Lys-142 is a catalytic residue. Glu-184 contributes to the Co(2+) binding site. Residue Glu-244 is part of the active site. Co(2+)-binding residues include His-247 and His-263. A disordered region spans residues 371–390 (PPRPAAARTDDAATVLGGAG).

The protein belongs to the sugar phosphate cyclases superfamily. DOI synthase family. The cofactor is NAD(+). It depends on Co(2+) as a cofactor.

The catalysed reaction is D-glucose 6-phosphate = 2-deoxy-L-scyllo-inosose + phosphate. It functions in the pathway metabolic intermediate biosynthesis; 2-deoxystreptamine biosynthesis; 2-deoxystreptamine from D-glucose 6-phosphate: step 1/4. The protein operates within antibiotic biosynthesis; kanamycin biosynthesis. Functionally, catalyzes the intramolecular carbocycle formation from D-glucose-6-phosphate to 2-deoxy-scyllo-inosose (DOI). This Streptomyces kanamyceticus protein is 2-deoxy-scyllo-inosose synthase (kanC).